We begin with the raw amino-acid sequence, 295 residues long: Glutamyl-Q tRNA(Asp) synthetase (295 aa).

Residues Arg-9–Thr-13 and Glu-45 each bind L-glutamate. Residues Pro-12–Ser-22 carry the 'HIGH' region motif. Cys-101, Cys-103, Tyr-115, and Cys-119 together coordinate Zn(2+). The L-glutamate site is built by Tyr-172 and Arg-190. The short motif at Lys-228–Ser-232 is the 'KMSKS' region element. Lys-231 contacts ATP.

The protein belongs to the class-I aminoacyl-tRNA synthetase family. GluQ subfamily. The cofactor is Zn(2+).

Functionally, catalyzes the tRNA-independent activation of glutamate in presence of ATP and the subsequent transfer of glutamate onto a tRNA(Asp). Glutamate is transferred on the 2-amino-5-(4,5-dihydroxy-2-cyclopenten-1-yl) moiety of the queuosine in the wobble position of the QUC anticodon. The polypeptide is Glutamyl-Q tRNA(Asp) synthetase (Pseudomonas syringae pv. syringae (strain B728a)).